Consider the following 502-residue polypeptide: ATP synthase subunit alpha (502 aa).

169-176 (GDKQTGKT) serves as a coordination point for ATP.

Belongs to the ATPase alpha/beta chains family. As to quaternary structure, F-type ATPases have 2 components, CF(1) - the catalytic core - and CF(0) - the membrane proton channel. CF(1) has five subunits: alpha(3), beta(3), gamma(1), delta(1), epsilon(1). CF(0) has three main subunits: a(1), b(2) and c(9-12). The alpha and beta chains form an alternating ring which encloses part of the gamma chain. CF(1) is attached to CF(0) by a central stalk formed by the gamma and epsilon chains, while a peripheral stalk is formed by the delta and b chains.

Its subcellular location is the cell membrane. It carries out the reaction ATP + H2O + 4 H(+)(in) = ADP + phosphate + 5 H(+)(out). Produces ATP from ADP in the presence of a proton gradient across the membrane. The alpha chain is a regulatory subunit. This Lachnoclostridium phytofermentans (strain ATCC 700394 / DSM 18823 / ISDg) (Clostridium phytofermentans) protein is ATP synthase subunit alpha.